The chain runs to 132 residues: Fluoride-specific ion channel FluC (132 aa).

The next 4 membrane-spanning stretches (helical) occupy residues 5–25 (LVAIGAGAALGANLRWLLGMW), 36–56 (GTLAANWLGAWLIGIAIALFA), 68–88 (FVVTGFLGALTTFSTFSAEMF), and 103–123 (IAVHVAGSLAMTGLGIATFGA). Positions 75 and 78 each coordinate Na(+).

It belongs to the fluoride channel Fluc/FEX (TC 1.A.43) family.

It is found in the cell inner membrane. The enzyme catalyses fluoride(in) = fluoride(out). Na(+) is not transported, but it plays an essential structural role and its presence is essential for fluoride channel function. Functionally, fluoride-specific ion channel. Important for reducing fluoride concentration in the cell, thus reducing its toxicity. This is Fluoride-specific ion channel FluC from Chromohalobacter salexigens (strain ATCC BAA-138 / DSM 3043 / CIP 106854 / NCIMB 13768 / 1H11).